The sequence spans 150 residues: UPF0756 membrane protein Dd1591_2981 (150 aa).

Transmembrane regions (helical) follow at residues 10–32 (ILLALAALGIISQNMTVTLAILF), 51–71 (YGLSFGVLVLTIGVMAPIASG), 88–108 (LMAVAIGVAVSWLGGRGVVLM), and 127–147 (ALFRGVPVGPLIAAGLLSLLI).

The protein belongs to the UPF0756 family.

Its subcellular location is the cell membrane. The protein is UPF0756 membrane protein Dd1591_2981 of Dickeya chrysanthemi (strain Ech1591) (Dickeya zeae (strain Ech1591)).